The chain runs to 315 residues: tRNA dimethylallyltransferase (315 aa).

ATP is bound at residue 13 to 20; the sequence is GPTASGKS. 15–20 contacts substrate; it reads TASGKS. Interaction with substrate tRNA regions lie at residues 38–41 and 162–166; these read DSMQ and QRLAR.

It belongs to the IPP transferase family. As to quaternary structure, monomer. Requires Mg(2+) as cofactor.

It carries out the reaction adenosine(37) in tRNA + dimethylallyl diphosphate = N(6)-dimethylallyladenosine(37) in tRNA + diphosphate. Its function is as follows. Catalyzes the transfer of a dimethylallyl group onto the adenine at position 37 in tRNAs that read codons beginning with uridine, leading to the formation of N6-(dimethylallyl)adenosine (i(6)A). The polypeptide is tRNA dimethylallyltransferase (Paramagnetospirillum magneticum (strain ATCC 700264 / AMB-1) (Magnetospirillum magneticum)).